The sequence spans 100 residues: Large ribosomal subunit protein uL23 (100 aa).

This sequence belongs to the universal ribosomal protein uL23 family. In terms of assembly, part of the 50S ribosomal subunit. Contacts protein L29, and trigger factor when it is bound to the ribosome.

Its function is as follows. One of the early assembly proteins it binds 23S rRNA. One of the proteins that surrounds the polypeptide exit tunnel on the outside of the ribosome. Forms the main docking site for trigger factor binding to the ribosome. The protein is Large ribosomal subunit protein uL23 of Corynebacterium aurimucosum (strain ATCC 700975 / DSM 44827 / CIP 107346 / CN-1) (Corynebacterium nigricans).